Consider the following 421-residue polypeptide: Protein MID1-COMPLEMENTING ACTIVITY 1 (421 aa).

Residues 188 to 218 (RFCEALKTENEKLQIELQRSQEHYDVAQCEV) adopt a coiled-coil conformation. The tract at residues 233 to 288 (EPDSEKELTKKASKKSERSSSMKTEYSYDEDSPKKSSTRAASRSTSNVSSGHDLLS) is disordered. The segment covering 235–252 (DSEKELTKKASKKSERSS) has biased composition (basic and acidic residues). Residues 270–282 (TRAASRSTSNVSS) show a composition bias toward low complexity. The helical transmembrane segment at 346 to 362 (LMAYSLILSCCCYTCCV) threads the bilayer.

As to expression, expressed in roots, leaves, stems, flowers and siliques. Expressed in vascular tissues of cotyledons, leaves and primary root, in the promeristem and adjacent elongation zone of the primary root and in the shoot apical meristem. Detected in the stele and endodermis, but not in the cortex, epidermis or root cap, including the columella. Not expressed in root hairs or in mesophyll cells of leaves and cotyledons.

It localises to the cell membrane. Its activity is regulated as follows. Inhibited by GdCl(3), but not by verapamil. Its function is as follows. Calcium-permeable stretch-activated channel component. Involved in mechano-stimulated calcium uptake mechanism and in mechanosensing in the primary root. The sequence is that of Protein MID1-COMPLEMENTING ACTIVITY 1 (MCA1) from Arabidopsis thaliana (Mouse-ear cress).